The chain runs to 337 residues: 2-oxoglutarate receptor 1 (337 aa).

At 1 to 37 (MIETLDSPANDSDFLDYITALENCTDEQISFKMQYLP) the chain is on the extracellular side. N23 is a glycosylation site (N-linked (GlcNAc...) asparagine). Residues 38–58 (VIYSIIFLVGFPGNTVAISIY) form a helical membrane-spanning segment. Topologically, residues 59 to 69 (VFKMRPWKSST) are cytoplasmic. A helical transmembrane segment spans residues 70-90 (IIMLNLALTDLLYLTSLPFLI). Topologically, residues 91–116 (HYYASGENWIFGDFMCKFIRFGFHFN) are extracellular. The cysteines at positions 106 and 183 are disulfide-linked. Residues 117–137 (LYSSILFLTCFSLFRYIVIIH) form a helical membrane-spanning segment. Residues 138–151 (PMSCFSIQKTRWAV) are Cytoplasmic-facing. Residues 152 to 172 (VACAGVWVISLVAVMPMTFLI) form a helical membrane-spanning segment. Over 173-200 (TSTTRTNRSACLDLTSSDDLTTIKWYNL) the chain is Extracellular. A helical membrane pass occupies residues 201–221 (ILTATTFCLPLLIVTLCYTTI). Over 222–242 (ISTLTHGPRTHSCFKQKARRL) the chain is Cytoplasmic. Residues 243-263 (TILLLLVFYVCFLPFHILRVI) traverse the membrane as a helical segment. Residues 264 to 284 (RIESRLLSISCSIESHIHEAY) lie on the Extracellular side of the membrane. The helical transmembrane segment at 285–305 (IVSRPLAALNTFGNLLLYVVV) threads the bilayer. Topologically, residues 306–337 (SNNFQQAFCSAVRCKAIGDLEQAKKDSCSNNP) are cytoplasmic.

The protein belongs to the G-protein coupled receptor 1 family. Highly expressed in mast cells and is found predominantly in the tissues of the respiratory tract and kidneys.

Its subcellular location is the cell membrane. Its function is as follows. G protein-coupled receptor for dicarboxylates and amino dicarboxylates. Receptor for itaconate, a metabolite produced by myeloid lineages. In the respiratory epithelium, couples the binding of itaconate to the activation of GNA11 and downstream intracellular Ca(2+) release, leading to mucocilliary clearance of airborne pathogens. Receptor for leukotriene E4 (LTE4) produced by mast cells upon allergic inflammation. Binds with high affinity to LTE4 and elicits mucin release from pulmonary epithelium in response to airborne fungi allergens. Regulates mucin-producing goblet cell homeostasis. Receptor for alpha-ketoglutarate produced by proximal tubule renal cells upon metabolic alkalosis. In an intrarenal paracrine signaling pathway, binds alpha-ketoglutarate and drives transepithelial salt reabsorption and bicarbonate secretion by SLC26A4/pendrin-positive intercalated cells. This is 2-oxoglutarate receptor 1 (Oxgr1) from Rattus norvegicus (Rat).